A 530-amino-acid chain; its full sequence is Carbohydrate sulfotransferase 2 (530 aa).

The Cytoplasmic segment spans residues 1–54 (MSRSPQRALPPGALPRLLQAAPAAAPRALLPQWPRRPGRRWPASPLGMKVFRRK). A helical; Signal-anchor for type II membrane protein membrane pass occupies residues 55-75 (ALVLCAGYALLLVLTMLNLLD). Over 76-530 (YKWHKEPLQQ…SKTLLRKPRL (455 aa)) the chain is Lumenal. Positions 89–119 (DGPLGAAAGAAGGSWGRPGPPPAGPPRAHAR) are disordered. Residue 173–179 (WRSGSSF) coordinates 3'-phosphoadenylyl sulfate. An N-linked (GlcNAc...) asparagine glycan is attached at Asn243. 332–340 (RDPRAVASS) lines the 3'-phosphoadenylyl sulfate pocket. Asn457 and Asn475 each carry an N-linked (GlcNAc...) asparagine glycan.

The protein belongs to the sulfotransferase 1 family. Gal/GlcNAc/GalNAc subfamily. Homodimer; disulfide-linked. Homodimerization is not essential for enzyme activity. In terms of processing, glycosylation at Asn-475 is required for catalytic activity. In terms of tissue distribution, widely expressed. Highly expressed in bone marrow, peripheral blood leukocytes, spleen, brain, spinal cord, ovary and placenta. Expressed by high endothelial cells (HEVs) and leukocytes.

It localises to the golgi apparatus. The protein resides in the trans-Golgi network membrane. The enzyme catalyses 3-O-{N-acetyl-beta-D-glucosaminyl-(1-&gt;3)-beta-D-galactosyl-(1-&gt;3)-N-acetyl-alpha-D-galactosaminyl}-L-threonyl-[protein] + 3'-phosphoadenylyl sulfate = 3-O-{6-O-sulfo-N-acetyl-beta-D-glucosaminyl-(1-&gt;3)-beta-D-galactosyl-(1-&gt;3)-N-acetyl-alpha-D-galactosaminyl}-L-threonyl-[protein] + adenosine 3',5'-bisphosphate + H(+). It carries out the reaction 3-O-{N-acetyl-beta-D-glucosaminyl-(1-&gt;3)-beta-D-galactosyl-(1-&gt;3)-N-acetyl-alpha-D-galactosaminyl}-L-seryl-[protein] + 3'-phosphoadenylyl sulfate = 3-O-{6-O-sulfo-N-acetyl-beta-D-glucosaminyl-(1-&gt;3)-beta-D-galactosyl-(1-&gt;3)-N-acetyl-alpha-D-galactosaminyl}-L-seryl-[protein] + adenosine 3',5'-bisphosphate + H(+). It catalyses the reaction a 3-O-{beta-D-galactosyl-(1-&gt;3)-[N-acetyl-beta-D-glucosaminyl-(1-&gt;6)]-N-acetyl-alpha-D-galactosaminyl}-L-threonyl-[protein] + 3'-phosphoadenylyl sulfate = 3-O-{beta-D-galactosyl-(1-&gt;3)-[6-O-sulfo-N-acetyl-beta-D-glucosaminyl-(1-&gt;6)]-N-acetyl-alpha-D-galactosaminyl}-L-threonyl-[protein] + adenosine 3',5'-bisphosphate + H(+). The catalysed reaction is 3-O-{beta-D-galactosyl-(1-&gt;3)-[N-acetyl-beta-D-glucosaminyl-(1-&gt;6)]-N-acetyl-alpha-D-galactosaminyl}-L-seryl-[protein] + 3'-phosphoadenylyl sulfate = 3-O-{beta-D-galactosyl-(1-&gt;3)-[6-O-sulfo-N-acetyl-beta-D-glucosaminyl-(1-&gt;6)]-N-acetyl-alpha-D-galactosaminyl}-L-seryl-[protein] + adenosine 3',5'-bisphosphate + H(+). It functions in the pathway protein modification; carbohydrate sulfation. Functionally, sulfotransferase that utilizes 3'-phospho-5'-adenylyl sulfate (PAPS) as sulfonate donor to catalyze the transfer of sulfate to position 6 of non-reducing N-acetylglucosamine (GlcNAc) residues within keratan-like structures on N-linked glycans and within mucin-associated glycans that can ultimately serve as SELL ligands. SELL ligands are present in high endothelial cells (HEVs) and play a central role in lymphocyte homing at sites of inflammation. Participates in biosynthesis of the SELL ligand sialyl 6-sulfo Lewis X and in lymphocyte homing to Peyer patches. Has no activity toward O-linked sugars. Its substrate specificity may be influenced by its subcellular location. Sulfates GlcNAc residues at terminal, non-reducing ends of oligosaccharide chains. The polypeptide is Carbohydrate sulfotransferase 2 (CHST2) (Homo sapiens (Human)).